A 562-amino-acid chain; its full sequence is NAD-dependent malic enzyme (562 aa).

Y101 acts as the Proton donor in catalysis. R154 contributes to the NAD(+) binding site. K172 functions as the Proton acceptor in the catalytic mechanism. A divalent metal cation is bound by residues E243, D244, and D267. Residues D267 and N415 each coordinate NAD(+).

The protein belongs to the malic enzymes family. In terms of assembly, homotetramer. It depends on Mg(2+) as a cofactor. Mn(2+) is required as a cofactor.

It catalyses the reaction (S)-malate + NAD(+) = pyruvate + CO2 + NADH. The enzyme catalyses oxaloacetate + H(+) = pyruvate + CO2. This chain is NAD-dependent malic enzyme, found in Vibrio parahaemolyticus serotype O3:K6 (strain RIMD 2210633).